The primary structure comprises 129 residues: uncharacterized protein (129 aa).

The region spanning 6–129 (QVHHIAIIAT…DGLPLELYEQ (124 aa)) is the VOC domain. 4 residues coordinate a divalent metal cation: histidine 9, glutamate 57, histidine 78, and glutamate 125.

To B.subtilis YwkD.

This is an uncharacterized protein from Escherichia coli (strain K12).